The primary structure comprises 186 residues: ATP synthase subunit b (186 aa).

The helical transmembrane segment at 28 to 48 (IVWSIIPFAVILFVFWKFVLP) threads the bilayer.

Belongs to the ATPase B chain family. F-type ATPases have 2 components, F(1) - the catalytic core - and F(0) - the membrane proton channel. F(1) has five subunits: alpha(3), beta(3), gamma(1), delta(1), epsilon(1). F(0) has three main subunits: a(1), b(2) and c(10-14). The alpha and beta chains form an alternating ring which encloses part of the gamma chain. F(1) is attached to F(0) by a central stalk formed by the gamma and epsilon chains, while a peripheral stalk is formed by the delta and b chains.

It localises to the cell membrane. Functionally, f(1)F(0) ATP synthase produces ATP from ADP in the presence of a proton or sodium gradient. F-type ATPases consist of two structural domains, F(1) containing the extramembraneous catalytic core and F(0) containing the membrane proton channel, linked together by a central stalk and a peripheral stalk. During catalysis, ATP synthesis in the catalytic domain of F(1) is coupled via a rotary mechanism of the central stalk subunits to proton translocation. Component of the F(0) channel, it forms part of the peripheral stalk, linking F(1) to F(0). In Corynebacterium jeikeium (strain K411), this protein is ATP synthase subunit b.